Reading from the N-terminus, the 165-residue chain is Ubiquitin D (165 aa).

Ubiquitin-like domains lie at 6 to 81 (SCLC…LKVV) and 90 to 163 (LFLV…CYCI).

It belongs to the ubiquitin D family. In terms of assembly, interacts directly with the 26S proteasome. Interacts with NUB1; this interaction facilitates the linking of UBD-conjugated target protein to the proteasome complex and accelerates its own degradation and that of its conjugates. Interacts (via ubiquitin-like 1 domain) with the spindle checkpoint protein MAD2L1 during mitosis. Present in aggresomes of proteasome inhibited cells. Interacts with HDAC6 under proteasome impairment conditions. Forms a thioester with UBA6 in cells stimulated with tumor necrosis factor-alpha (TNFa) and interferon-gamma (IFNg). Interacts with SQSTM1 and TP53/p53. In terms of processing, can be acetylated. In terms of tissue distribution, constitutively expressed in mature dendritic cells and B-cells. Mostly expressed in the reticuloendothelial system (e.g. thymus, spleen), the gastrointestinal system, kidney, lung and prostate gland.

It localises to the nucleus. It is found in the cytoplasm. Ubiquitin-like protein modifier which can be covalently attached to target proteins and subsequently leads to their degradation by the 26S proteasome, in a NUB1-dependent manner. Conjugation to the target protein is activated by UBA6 via adenylation of its C-terminal glycine. Promotes the expression of the proteasome subunit beta type-9 (PSMB9/LMP2). Regulates TNF-alpha-induced and LPS-mediated activation of the central mediator of innate immunity NF-kappa-B by promoting TNF-alpha-mediated proteasomal degradation of ubiquitinated-I-kappa-B-alpha. Required for TNF-alpha-induced p65 nuclear translocation in renal tubular epithelial cells (RTECs). May be involved in dendritic cell (DC) maturation, the process by which immature dendritic cells differentiate into fully competent antigen-presenting cells that initiate T-cell responses. Mediates mitotic non-disjunction and chromosome instability, in long-term in vitro culture and cancers, by abbreviating mitotic phase and impairing the kinetochore localization of MAD2L1 during the prometaphase stage of the cell cycle. May be involved in the formation of aggresomes when proteasome is saturated or impaired. Mediates apoptosis in a caspase-dependent manner, especially in renal epithelium and tubular cells during renal diseases such as polycystic kidney disease and Human immunodeficiency virus (HIV)-associated nephropathy (HIVAN). The sequence is that of Ubiquitin D (UBD) from Homo sapiens (Human).